A 96-amino-acid polypeptide reads, in one-letter code: uncharacterized protein (96 aa).

Residues 9-86 are a coiled coil; sequence EELKSQAQVY…NKYADTVAER (78 aa).

The protein belongs to the WXG100 family. sagEsxA-like subfamily.

This is an uncharacterized protein from Clostridium acetobutylicum (strain ATCC 824 / DSM 792 / JCM 1419 / IAM 19013 / LMG 5710 / NBRC 13948 / NRRL B-527 / VKM B-1787 / 2291 / W).